We begin with the raw amino-acid sequence, 199 residues long: Type-4 uracil-DNA glycosylase (199 aa).

[4Fe-4S] cluster-binding residues include Cys-14 and Cys-17. Residues 41–43 (GEA), Phe-55, and Asn-81 each bind uracil. Residues 77–114 (VYITNVLKCRPPNNRDPTPEEVEKCGDYLVRQLEAIRP) are pseudo-FCL. Positions 85 and 101 each coordinate [4Fe-4S] cluster. His-163 provides a ligand contact to uracil.

It belongs to the uracil-DNA glycosylase (UDG) superfamily. Type 4 (UDGa) family.

The catalysed reaction is Hydrolyzes single-stranded DNA or mismatched double-stranded DNA and polynucleotides, releasing free uracil.. Its activity is regulated as follows. Product-inhibited by both uracil and apurinic/apyrimidinic sites. In terms of biological role, removes uracil bases that are present in DNA as a result of either deamination of cytosine or misincorporation of dUMP instead of dTMP. Can remove uracil from double-stranded DNA containing either a U/G or U/A base pair as well as from single-stranded DNA. The protein is Type-4 uracil-DNA glycosylase of Archaeoglobus fulgidus (strain ATCC 49558 / DSM 4304 / JCM 9628 / NBRC 100126 / VC-16).